A 311-amino-acid polypeptide reads, in one-letter code: 4-hydroxy-3-methylbut-2-enyl diphosphate reductase (311 aa).

Cys12 is a binding site for [4Fe-4S] cluster. (2E)-4-hydroxy-3-methylbut-2-enyl diphosphate contacts are provided by His41 and His74. His41 and His74 together coordinate dimethylallyl diphosphate. The isopentenyl diphosphate site is built by His41 and His74. Cys96 contributes to the [4Fe-4S] cluster binding site. Residue His124 participates in (2E)-4-hydroxy-3-methylbut-2-enyl diphosphate binding. His124 lines the dimethylallyl diphosphate pocket. Residue His124 participates in isopentenyl diphosphate binding. The Proton donor role is filled by Glu126. Thr168 serves as a coordination point for (2E)-4-hydroxy-3-methylbut-2-enyl diphosphate. Cys198 contacts [4Fe-4S] cluster. Residues Ser226, Ser227, Asn228, and Ser270 each contribute to the (2E)-4-hydroxy-3-methylbut-2-enyl diphosphate site. Residues Ser226, Ser227, Asn228, and Ser270 each coordinate dimethylallyl diphosphate. 4 residues coordinate isopentenyl diphosphate: Ser226, Ser227, Asn228, and Ser270.

It belongs to the IspH family. [4Fe-4S] cluster is required as a cofactor.

The catalysed reaction is isopentenyl diphosphate + 2 oxidized [2Fe-2S]-[ferredoxin] + H2O = (2E)-4-hydroxy-3-methylbut-2-enyl diphosphate + 2 reduced [2Fe-2S]-[ferredoxin] + 2 H(+). It catalyses the reaction dimethylallyl diphosphate + 2 oxidized [2Fe-2S]-[ferredoxin] + H2O = (2E)-4-hydroxy-3-methylbut-2-enyl diphosphate + 2 reduced [2Fe-2S]-[ferredoxin] + 2 H(+). Its pathway is isoprenoid biosynthesis; dimethylallyl diphosphate biosynthesis; dimethylallyl diphosphate from (2E)-4-hydroxy-3-methylbutenyl diphosphate: step 1/1. It functions in the pathway isoprenoid biosynthesis; isopentenyl diphosphate biosynthesis via DXP pathway; isopentenyl diphosphate from 1-deoxy-D-xylulose 5-phosphate: step 6/6. Catalyzes the conversion of 1-hydroxy-2-methyl-2-(E)-butenyl 4-diphosphate (HMBPP) into a mixture of isopentenyl diphosphate (IPP) and dimethylallyl diphosphate (DMAPP). Acts in the terminal step of the DOXP/MEP pathway for isoprenoid precursor biosynthesis. This chain is 4-hydroxy-3-methylbut-2-enyl diphosphate reductase, found in Saccharophagus degradans (strain 2-40 / ATCC 43961 / DSM 17024).